Here is a 445-residue protein sequence, read N- to C-terminus: Rab GDP dissociation inhibitor beta (445 aa).

The residue at position 1 (M1) is an N-acetylmethionine. An N6-succinyllysine modification is found at K57. The residue at position 61 (S61) is a Phosphoserine. K112 carries the N6-acetyllysine modification. S130 is modified (phosphoserine). K269 carries the N6-acetyllysine modification. A Phosphoserine modification is found at S382.

This sequence belongs to the Rab GDI family. In terms of assembly, interacts with RHOH. Interacts with the GDP-bound inactive forms of RAB3A, RAB3B, RAB3C, RAB5A, RAB5B, RAB5C, RAB8A, RAB8B, RAB10, RAB12, RAB35, and RAB43; binds RAB3D to a lesser extent. Interacts with DZIP1; this interaction negatively regulates the interaction of GDI2 with GDP-bound RAB8A. As to expression, ubiquitous.

The protein localises to the cytoplasm. It localises to the membrane. The protein resides in the golgi apparatus. Its subcellular location is the trans-Golgi network. GDP-dissociation inhibitor preventing the GDP to GTP exchange of most Rab proteins. By keeping these small GTPases in their inactive GDP-bound form regulates intracellular membrane trafficking. Negatively regulates protein transport to the cilium and ciliogenesis through the inhibition of RAB8A. The polypeptide is Rab GDP dissociation inhibitor beta (GDI2) (Homo sapiens (Human)).